The sequence spans 115 residues: CRISPR-associated endoribonuclease Cas2 (115 aa).

Residue Asp22 participates in Mg(2+) binding.

It belongs to the CRISPR-associated endoribonuclease Cas2 protein family. In terms of assembly, homodimer, forms a heterotetramer with a Cas1 homodimer. It depends on Mg(2+) as a cofactor.

CRISPR (clustered regularly interspaced short palindromic repeat), is an adaptive immune system that provides protection against mobile genetic elements (viruses, transposable elements and conjugative plasmids). CRISPR clusters contain sequences complementary to antecedent mobile elements and target invading nucleic acids. CRISPR clusters are transcribed and processed into CRISPR RNA (crRNA). Functions as a ssRNA-specific endoribonuclease. Involved in the integration of spacer DNA into the CRISPR cassette. The chain is CRISPR-associated endoribonuclease Cas2 from Flavobacterium psychrophilum (strain ATCC 49511 / DSM 21280 / CIP 103535 / JIP02/86).